A 1061-amino-acid chain; its full sequence is Bifunctional cytochrome P450/NADPH--P450 reductase 1 (1061 aa).

Positions 1-475 (MKETSPIPQP…AEKAAPDEQK (475 aa)) are cytochrome P450. Cysteine 403 provides a ligand contact to heme. Residues 476–1061 (EKTEAKGASV…MYAKDVWAGI (586 aa)) are NADPH--P450 reductase. Residues 493–632 (LLVLYGSDTG…QLDEWKKSMW (140 aa)) enclose the Flavodoxin-like domain. Residues 499–504 (SDTGTA), 546–549 (SYNG), 580–582 (CGD), and 588–590 (TYQ) contribute to the FMN site. One can recognise an FAD-binding FR-type domain in the interval 671–904 (YEASHASIAE…RTPESRFQLP (234 aa)).

This sequence in the N-terminal section; belongs to the cytochrome P450 family. FAD is required as a cofactor. Requires FMN as cofactor. Heme b serves as cofactor.

It is found in the cytoplasm. It carries out the reaction an organic molecule + reduced [NADPH--hemoprotein reductase] + O2 = an alcohol + oxidized [NADPH--hemoprotein reductase] + H2O + H(+). It catalyses the reaction 2 oxidized [cytochrome P450] + NADPH = 2 reduced [cytochrome P450] + NADP(+) + H(+). In terms of biological role, functions as a fatty acid monooxygenase. Catalyzes hydroxylation of a range of long-chain fatty acids, with a preference for long-chain unsaturated and branched-chain fatty acids over saturated fatty acids. Hydroxylation of myristic acid occurs mainly at the omega-2 position. Also displays a NADPH-dependent reductase activity in the C-terminal domain, which allows electron transfer from NADPH to the heme iron of the cytochrome P450 N-terminal domain. Is also able to catalyze efficient oxidation of sodium dodecyl sulfate (SDS). The sequence is that of Bifunctional cytochrome P450/NADPH--P450 reductase 1 from Bacillus subtilis (strain 168).